Here is a 595-residue protein sequence, read N- to C-terminus: Merlin (595 aa).

Ser13 is subject to Phosphoserine. Positions 22–311 constitute an FERM domain; the sequence is FTVRIVTMDA…GNHDLFMRRR (290 aa). Position 518 is a phosphoserine; by PAK (Ser518).

Interacts with NHERF1, HGS and AGAP2. Interacts with SGSM3. Interacts (via FERM domain) with MPP1. Interacts with LAYN and WWC1. Interacts with the CUL4A-RBX1-DDB1-VprBP/DCAF1 E3 ubiquitin-protein ligase complex. The unphosphorylated form interacts (via FERM domain) with VPRBP/DCAF1. Interacts (via FERM domain) with NOP53; the interaction is direct. Interacts with SCHIP1; the interaction is direct. In terms of processing, phosphorylation of Ser-518 inhibits nuclear localization by disrupting the intramolecular association of the FERM domain with the C-terminal tail. Ubiquitinated by the CUL4A-RBX1-DDB1-DCAF1/VprBP E3 ubiquitin-protein ligase complex for ubiquitination and subsequent proteasome-dependent degradation. Post-translationally, phosphorylation of Ser-518 inhibits nuclear localization by disrupting the intramolecular association of the FERM domain with the C-terminal tail. The dephosphorylation of Ser-518 favors the interaction with NOP53.

Its subcellular location is the cell membrane. The protein resides in the cell projection. The protein localises to the cytoplasm. It localises to the cytoskeleton. It is found in the nucleus. In terms of biological role, probable regulator of the Hippo/SWH (Sav/Wts/Hpo) signaling pathway, a signaling pathway that plays a pivotal role in tumor suppression by restricting proliferation and promoting apoptosis. Along with WWC1 can synergistically induce the phosphorylation of LATS1 and LATS2 and can probably function in the regulation of the Hippo/SWH (Sav/Wts/Hpo) signaling pathway. May act as a membrane stabilizing protein. May inhibit PI3 kinase by binding to AGAP2 and impairing its stimulating activity. Suppresses cell proliferation and tumorigenesis by inhibiting the CUL4A-RBX1-DDB1-VprBP/DCAF1 E3 ubiquitin-protein ligase complex. This Papio anubis (Olive baboon) protein is Merlin (NF2).